Here is a 167-residue protein sequence, read N- to C-terminus: Iron-sulfur cluster assembly protein 1 (167 aa).

A mitochondrion-targeting transit peptide spans 1-50 (MMLKQAAKKALGLTSRQSTPWSVGILRTYHENVIDHYDNPRNVGSFDKND).

The protein belongs to the NifU family. Component of the core Fe-S cluster (ISC) assembly machinery. Interacts with HSCB. Requires [2Fe-2S] cluster as cofactor. Expressed in roots, stems, leaves, flowers, pollen and siliques.

It is found in the mitochondrion matrix. Its subcellular location is the cytoplasm. The protein resides in the cytosol. It participates in cofactor biosynthesis; iron-sulfur cluster biosynthesis. Scaffold protein for the de novo synthesis of iron-sulfur (Fe-S) clusters within mitochondria, which is required for maturation of both mitochondrial and cytoplasmic [2Fe-2S] and [4Fe-4S] proteins. First, a [2Fe-2S] cluster is transiently assembled on the scaffold protein ISCU (ISU1, ISU2 or ISU3). In a second step, the cluster is released from ISCU, transferred to a glutaredoxin, followed by the formation of mitochondrial [2Fe-2S] proteins, the synthesis of [4Fe-4S] clusters and their target-specific insertion into the recipient apoproteins. Cluster assembly on ISCU depends on the function of the cysteine desulfurase complex NFS1-ISD11, which serves as the sulfur donor for cluster synthesis, the iron-binding protein frataxin as the putative iron donor, and the electron transfer chain comprised of ferredoxin reductase and ferredoxin, which receive their electrons from NADH. The chain is Iron-sulfur cluster assembly protein 1 (ISU1) from Arabidopsis thaliana (Mouse-ear cress).